The primary structure comprises 587 residues: Proteasome-associated ATPase (587 aa).

Positions 9-94 (ARKAQHDAEI…KEEVDRLAQP (86 aa)) form a coiled coil. 276–281 (GCGKTL) lines the ATP pocket. The docks into pockets in the proteasome alpha-ring stretch occupies residues 586 to 587 (YL).

This sequence belongs to the AAA ATPase family. As to quaternary structure, homohexamer. Assembles into a hexameric ring structure that caps the 20S proteasome core. Strongly interacts with the prokaryotic ubiquitin-like protein Pup through a hydrophobic interface; the interacting region of ARC lies in its N-terminal coiled-coil domain. There is one Pup binding site per ARC hexamer ring. Upon ATP-binding, the C-terminus of ARC interacts with the alpha-rings of the proteasome core, possibly by binding to the intersubunit pockets.

It functions in the pathway protein degradation; proteasomal Pup-dependent pathway. ATPase which is responsible for recognizing, binding, unfolding and translocation of pupylated proteins into the bacterial 20S proteasome core particle. May be essential for opening the gate of the 20S proteasome via an interaction with its C-terminus, thereby allowing substrate entry and access to the site of proteolysis. Thus, the C-termini of the proteasomal ATPase may function like a 'key in a lock' to induce gate opening and therefore regulate proteolysis. This Thermomonospora curvata (strain ATCC 19995 / DSM 43183 / JCM 3096 / KCTC 9072 / NBRC 15933 / NCIMB 10081 / Henssen B9) protein is Proteasome-associated ATPase.